Here is a 154-residue protein sequence, read N- to C-terminus: Large ribosomal subunit protein uL13 (154 aa).

It belongs to the universal ribosomal protein uL13 family. In terms of assembly, part of the 50S ribosomal subunit.

Functionally, this protein is one of the early assembly proteins of the 50S ribosomal subunit, although it is not seen to bind rRNA by itself. It is important during the early stages of 50S assembly. In Brucella melitensis biotype 2 (strain ATCC 23457), this protein is Large ribosomal subunit protein uL13.